Consider the following 258-residue polypeptide: Cytochrome P450 1A2 (258 aa).

The protein belongs to the cytochrome P450 family. Requires heme as cofactor.

It is found in the endoplasmic reticulum membrane. Its subcellular location is the microsome membrane. The enzyme catalyses an organic molecule + reduced [NADPH--hemoprotein reductase] + O2 = an alcohol + oxidized [NADPH--hemoprotein reductase] + H2O + H(+). Cytochromes P450 are a group of heme-thiolate monooxygenases. In liver microsomes, this enzyme is involved in an NADPH-dependent electron transport pathway. It oxidizes a variety of structurally unrelated compounds, including steroids, fatty acids, and xenobiotics. This chain is Cytochrome P450 1A2 (CYP1A2), found in Gallus gallus (Chicken).